A 639-amino-acid polypeptide reads, in one-letter code: MEDSQDLNEQSVKKTCTESDVSQSQNSRSMEMQDLASPHTLVGGGDTPGSSKLEKSNLSSTSVTTNGTGGENMTVLNTADWLLSCNTPSSATMSLLAVKTEPLNSSETTATTGDGALDTFTGSVITSSGYSPRSAHQYSPQLYPSKPYPHILSTPAAQTMSAYAGQTQYSGMQQPAVYTAYSQTGQPYSLPTYDLGVMLPAIKTESGLSQTQSPLQSGCLSYSPGFSTPQPGQTPYSYQMPGSSFAPSSTIYANNSVSNSTNFSGSQQDYPSYTAFGQNQYAQYYSASTYGAYMTSNNTADGTPSSTSTYQLQESLPGLTNQPGEFDTMQSPSTPIKDLDERTCRSSGSKSRGRGRKNNPSPPPDSDLERVFVWDLDETIIVFHSLLTGSYAQKYGKDPPMAVTLGLRMEEMIFNLADTHLFFNDLEECDQVHIDDVSSDDNGQDLSTYSFATDGFHAAASSANLCLPTGVRGGVDWMRKLAFRYRRVKELYNTYKNNVGGLLGPAKRDAWLQLRAEIEGLTDSWLTNALKSLSIISTRSNCINVLVTTTQLIPALAKVLLYSLGGAFPIENIYSATKIGKESCFERIMQRFGRKVVYVVIGDGVEEEQAAKKHNMPFWRISSHSDLLALHQALELEYL.

Position 1 is an N-acetylmethionine (M1). 3 disordered regions span residues 1–72 (MEDS…GGEN), 210–232 (QTQS…PQPG), and 300–368 (ADGT…DSDL). K14 is covalently cross-linked (Glycyl lysine isopeptide (Lys-Gly) (interchain with G-Cter in SUMO2)). A compositionally biased stretch (polar residues) spans 18–30 (ESDVSQSQNSRSM). Residue K52 forms a Glycyl lysine isopeptide (Lys-Gly) (interchain with G-Cter in SUMO2) linkage. Residues 56–66 (SNLSSTSVTTN) show a composition bias toward low complexity. The span at 300–334 (ADGTPSSTSTYQLQESLPGLTNQPGEFDTMQSPST) shows a compositional bias: polar residues. Phosphoserine is present on S361. Residue D375 is the Nucleophile of the active site. Mg(2+) contacts are provided by D375, D377, and D603. The active-site Proton donor is the D377.

The protein belongs to the HAD-like hydrolase superfamily. EYA family. As to quaternary structure, interacts with SIX3; translocates EYA4 from the cytoplasm to the nucleus and promotes activation of their target genes. Requires Mg(2+) as cofactor. As to expression, highly expressed in heart and skeletal muscle.

The protein resides in the cytoplasm. The protein localises to the nucleus. The enzyme catalyses O-phospho-L-tyrosyl-[protein] + H2O = L-tyrosyl-[protein] + phosphate. Functionally, tyrosine phosphatase that specifically dephosphorylates 'Tyr-142' of histone H2AX (H2AXY142ph). 'Tyr-142' phosphorylation of histone H2AX plays a central role in DNA repair and acts as a mark that distinguishes between apoptotic and repair responses to genotoxic stress. Promotes efficient DNA repair by dephosphorylating H2AX, promoting the recruitment of DNA repair complexes containing MDC1. Its function as histone phosphatase probably explains its role in transcription regulation during organogenesis. May be involved in development of the eye. The chain is Protein phosphatase EYA4 (EYA4) from Homo sapiens (Human).